Reading from the N-terminus, the 178-residue chain is Ribonuclease M5 (178 aa).

Residues 10 to 103 (DGVIVCEGKT…NSTKIGVAEA (94 aa)) form the Toprim domain. Positions 16, 62, and 64 each coordinate Mg(2+).

This sequence belongs to the ribonuclease M5 family. Requires Mg(2+) as cofactor.

Its subcellular location is the cytoplasm. The enzyme catalyses Endonucleolytic cleavage of RNA, removing 21 and 42 nucleotides, respectively, from the 5'- and 3'-termini of a 5S-rRNA precursor.. Required for correct processing of both the 5' and 3' ends of 5S rRNA precursor. Cleaves both sides of a double-stranded region yielding mature 5S rRNA in one step. This Mycoplasma pneumoniae (strain ATCC 29342 / M129 / Subtype 1) (Mycoplasmoides pneumoniae) protein is Ribonuclease M5.